The chain runs to 344 residues: SUMO-activating enzyme subunit 1 (344 aa).

It belongs to the ubiquitin-activating E1 family. As to quaternary structure, heterodimer of sae1 and uba2/sae2. The heterodimer corresponds to the two domains that are encoded on a single polypeptide chain in ubiquitin-activating enzyme E1. Interacts with ube2i.

The protein localises to the nucleus. It functions in the pathway protein modification; protein sumoylation. Its function is as follows. The heterodimer acts as an E1 ligase for sumo1, sumo2, and sumo3. It mediates ATP-dependent activation of sumo proteins followed by formation of a thioester bond between a sumo protein and a conserved active site cysteine residue on uba2/sae2. The polypeptide is SUMO-activating enzyme subunit 1 (sae1) (Xenopus laevis (African clawed frog)).